The chain runs to 484 residues: Aspartyl/glutamyl-tRNA(Asn/Gln) amidotransferase subunit B (484 aa).

The protein belongs to the GatB/GatE family. GatB subfamily. In terms of assembly, heterotrimer of A, B and C subunits.

The catalysed reaction is L-glutamyl-tRNA(Gln) + L-glutamine + ATP + H2O = L-glutaminyl-tRNA(Gln) + L-glutamate + ADP + phosphate + H(+). It catalyses the reaction L-aspartyl-tRNA(Asn) + L-glutamine + ATP + H2O = L-asparaginyl-tRNA(Asn) + L-glutamate + ADP + phosphate + 2 H(+). In terms of biological role, allows the formation of correctly charged Asn-tRNA(Asn) or Gln-tRNA(Gln) through the transamidation of misacylated Asp-tRNA(Asn) or Glu-tRNA(Gln) in organisms which lack either or both of asparaginyl-tRNA or glutaminyl-tRNA synthetases. The reaction takes place in the presence of glutamine and ATP through an activated phospho-Asp-tRNA(Asn) or phospho-Glu-tRNA(Gln). This is Aspartyl/glutamyl-tRNA(Asn/Gln) amidotransferase subunit B from Anaeromyxobacter sp. (strain K).